We begin with the raw amino-acid sequence, 296 residues long: Cytidine deaminase (296 aa).

2 consecutive CMP/dCMP-type deaminase domains span residues Thr52–Lys172 and Thr191–Leu296. Substrate is bound at residue Asn93–Glu95. A Zn(2+)-binding site is contributed by His106. Residue Glu108 is the Proton donor of the active site. Residues Cys133 and Cys136 each coordinate Zn(2+).

It belongs to the cytidine and deoxycytidylate deaminase family. As to quaternary structure, homodimer. Zn(2+) serves as cofactor.

The enzyme catalyses cytidine + H2O + H(+) = uridine + NH4(+). It catalyses the reaction 2'-deoxycytidine + H2O + H(+) = 2'-deoxyuridine + NH4(+). In terms of biological role, this enzyme scavenges exogenous and endogenous cytidine and 2'-deoxycytidine for UMP synthesis. The polypeptide is Cytidine deaminase (Actinobacillus succinogenes (strain ATCC 55618 / DSM 22257 / CCUG 43843 / 130Z)).